A 304-amino-acid chain; its full sequence is Serine protease 30 (304 aa).

The N-terminal stretch at 1 to 21 is a signal peptide; that stretch reads MESWARCIFLLLLQILTGGRG. Positions 22–30 are cleaved as a propeptide — activation peptide; the sequence is DILHSGAGK. Positions 31 to 271 constitute a Peptidase S1 domain; it reads IVGGQDAPEG…YVDWIQRTLA (241 aa). A disulfide bond links Cys57 and Cys73. His72 serves as the catalytic Charge relay system. Asn79 carries N-linked (GlcNAc...) asparagine glycosylation. Asp122 (charge relay system) is an active-site residue. Intrachain disulfides connect Cys155/Cys229, Cys185/Cys208, and Cys219/Cys247. Ser223 serves as the catalytic Charge relay system. N-linked (GlcNAc...) asparagine glycans are attached at residues Asn232 and Asn273. Residue Ser275 is the site of GPI-anchor amidated serine attachment. The propeptide at 276 to 304 is removed in mature form; that stretch reads DAYGCRSRASGAYPALLLVLLAFALPESL.

This sequence belongs to the peptidase S1 family. As to expression, expressed predominantly in kidney, small intestine and stomach and moderately in thymus, lung, spleen, testis and skin. In the kidney, expressed mainly in collecting duct of renal medulla and cortex.

It is found in the cell membrane. Inhibited by aprotinin, leupeptin, benzamidine and soybean trypsin inhibitor. Partially inhibited by PMSF and DFP. Its function is as follows. Selectively cleaves synthetic peptide substrates of trypsin. Activates the epithelial sodium channel ENaC. The protein is Serine protease 30 (Prss30) of Rattus norvegicus (Rat).